Reading from the N-terminus, the 255-residue chain is Wtf element wtf15 (255 aa).

Residues Lys-19–Ser-78 are disordered. Polar residues-rich tracts occupy residues Thr-41–Glu-60 and Glu-67–Ser-78. Transmembrane regions (helical) follow at residues Phe-85–Pro-105, Phe-112–Ile-132, Phe-162–Leu-182, and Trp-187–Leu-208.

This sequence belongs to the WTF family.

Its subcellular location is the spore membrane. Its function is as follows. May act in meiotic drive. The polypeptide is Wtf element wtf15 (Schizosaccharomyces pombe (strain 972 / ATCC 24843) (Fission yeast)).